Reading from the N-terminus, the 211-residue chain is Redox-sensing transcriptional repressor Rex (211 aa).

A DNA-binding region (H-T-H motif) is located at residues 17–56 (LYYRFVSILKGKGIDRVNSKTISEALQIDSATIRRDFSYF). Residue 91–96 (GIGNLG) coordinates NAD(+).

This sequence belongs to the transcriptional regulatory Rex family. Homodimer.

The protein resides in the cytoplasm. Its function is as follows. Modulates transcription in response to changes in cellular NADH/NAD(+) redox state. In Staphylococcus epidermidis (strain ATCC 35984 / DSM 28319 / BCRC 17069 / CCUG 31568 / BM 3577 / RP62A), this protein is Redox-sensing transcriptional repressor Rex.